Here is a 99-residue protein sequence, read N- to C-terminus: Small ribosomal subunit protein bS20 (99 aa).

It belongs to the bacterial ribosomal protein bS20 family.

In terms of biological role, binds directly to 16S ribosomal RNA. The polypeptide is Small ribosomal subunit protein bS20 (Caldicellulosiruptor saccharolyticus (strain ATCC 43494 / DSM 8903 / Tp8T 6331)).